A 442-amino-acid polypeptide reads, in one-letter code: Glutamate-1-semialdehyde 2,1-aminomutase (442 aa).

Lys-282 is subject to N6-(pyridoxal phosphate)lysine.

It belongs to the class-III pyridoxal-phosphate-dependent aminotransferase family. HemL subfamily. Homodimer. Requires pyridoxal 5'-phosphate as cofactor.

The protein localises to the cytoplasm. The catalysed reaction is (S)-4-amino-5-oxopentanoate = 5-aminolevulinate. The protein operates within porphyrin-containing compound metabolism; protoporphyrin-IX biosynthesis; 5-aminolevulinate from L-glutamyl-tRNA(Glu): step 2/2. The protein is Glutamate-1-semialdehyde 2,1-aminomutase of Polaromonas naphthalenivorans (strain CJ2).